A 47-amino-acid polypeptide reads, in one-letter code: uncharacterized protein (47 aa).

The N-terminal stretch at 1–25 (MAHKCASAKLLSGIMALLFNGKSLL) is a signal peptide.

This is an uncharacterized protein from Saccharomyces cerevisiae (strain ATCC 204508 / S288c) (Baker's yeast).